The chain runs to 374 residues: Peptide chain release factor 2 (374 aa).

Q252 is subject to N5-methylglutamine.

This sequence belongs to the prokaryotic/mitochondrial release factor family. In terms of processing, methylated by PrmC. Methylation increases the termination efficiency of RF2.

The protein resides in the cytoplasm. Its function is as follows. Peptide chain release factor 2 directs the termination of translation in response to the peptide chain termination codons UGA and UAA. The sequence is that of Peptide chain release factor 2 from Xanthomonas euvesicatoria pv. vesicatoria (strain 85-10) (Xanthomonas campestris pv. vesicatoria).